Here is a 394-residue protein sequence, read N- to C-terminus: Elongation factor Tu-A (394 aa).

Residues 10–204 form the tr-type G domain; the sequence is KPHVNVGTIG…HLDTYIPEPQ (195 aa). Residues 19–26 are G1; sequence GHVDHGKT. Position 19 to 26 (19 to 26) interacts with GTP; the sequence is GHVDHGKT. Thr26 serves as a coordination point for Mg(2+). The G2 stretch occupies residues 60 to 64; sequence GITIN. Residues 81 to 84 are G3; sequence DCPG. Residues 81–85 and 136–139 each bind GTP; these read DCPGH and NKCD. Residues 136 to 139 are G4; that stretch reads NKCD. Positions 174–176 are G5; that stretch reads SAL.

Belongs to the TRAFAC class translation factor GTPase superfamily. Classic translation factor GTPase family. EF-Tu/EF-1A subfamily. As to quaternary structure, monomer.

The protein localises to the cytoplasm. It carries out the reaction GTP + H2O = GDP + phosphate + H(+). In terms of biological role, GTP hydrolase that promotes the GTP-dependent binding of aminoacyl-tRNA to the A-site of ribosomes during protein biosynthesis. This Pasteurella multocida (strain Pm70) protein is Elongation factor Tu-A.